The following is a 577-amino-acid chain: Arginine--tRNA ligase (577 aa).

Positions 122–132 (PNVAKEMHVGH) match the 'HIGH' region motif.

It belongs to the class-I aminoacyl-tRNA synthetase family. Monomer.

The protein resides in the cytoplasm. It carries out the reaction tRNA(Arg) + L-arginine + ATP = L-arginyl-tRNA(Arg) + AMP + diphosphate. This chain is Arginine--tRNA ligase, found in Salmonella paratyphi B (strain ATCC BAA-1250 / SPB7).